Here is a 452-residue protein sequence, read N- to C-terminus: Bifunctional protein GlmU (452 aa).

The segment at 1 to 226 is pyrophosphorylase; it reads MVAVAILAAG…SQEILGINDR (226 aa). UDP-N-acetyl-alpha-D-glucosamine-binding positions include 7–10, lysine 21, glutamine 73, and 78–79; these read LAAG and GT. Residue aspartate 103 coordinates Mg(2+). Glycine 140, glutamate 155, asparagine 170, and asparagine 224 together coordinate UDP-N-acetyl-alpha-D-glucosamine. Residue asparagine 224 coordinates Mg(2+). The segment at 227 to 247 is linker; the sequence is LQLADSFRILQERIRQQWMLA. The tract at residues 248-452 is N-acetyltransferase; that stretch reads GVTLVDPTSI…ENWSTPTTEQ (205 aa). Residues arginine 329 and lysine 347 each contribute to the UDP-N-acetyl-alpha-D-glucosamine site. Catalysis depends on histidine 359, which acts as the Proton acceptor. UDP-N-acetyl-alpha-D-glucosamine is bound by residues tyrosine 362 and asparagine 373. Residues alanine 376, 382–383, alanine 419, and arginine 436 contribute to the acetyl-CoA site; that span reads NY.

It in the N-terminal section; belongs to the N-acetylglucosamine-1-phosphate uridyltransferase family. In the C-terminal section; belongs to the transferase hexapeptide repeat family. In terms of assembly, homotrimer. The cofactor is Mg(2+).

It localises to the cytoplasm. It catalyses the reaction alpha-D-glucosamine 1-phosphate + acetyl-CoA = N-acetyl-alpha-D-glucosamine 1-phosphate + CoA + H(+). The enzyme catalyses N-acetyl-alpha-D-glucosamine 1-phosphate + UTP + H(+) = UDP-N-acetyl-alpha-D-glucosamine + diphosphate. Its pathway is nucleotide-sugar biosynthesis; UDP-N-acetyl-alpha-D-glucosamine biosynthesis; N-acetyl-alpha-D-glucosamine 1-phosphate from alpha-D-glucosamine 6-phosphate (route II): step 2/2. The protein operates within nucleotide-sugar biosynthesis; UDP-N-acetyl-alpha-D-glucosamine biosynthesis; UDP-N-acetyl-alpha-D-glucosamine from N-acetyl-alpha-D-glucosamine 1-phosphate: step 1/1. It participates in bacterial outer membrane biogenesis; LPS lipid A biosynthesis. Functionally, catalyzes the last two sequential reactions in the de novo biosynthetic pathway for UDP-N-acetylglucosamine (UDP-GlcNAc). The C-terminal domain catalyzes the transfer of acetyl group from acetyl coenzyme A to glucosamine-1-phosphate (GlcN-1-P) to produce N-acetylglucosamine-1-phosphate (GlcNAc-1-P), which is converted into UDP-GlcNAc by the transfer of uridine 5-monophosphate (from uridine 5-triphosphate), a reaction catalyzed by the N-terminal domain. This is Bifunctional protein GlmU from Synechococcus sp. (strain ATCC 27144 / PCC 6301 / SAUG 1402/1) (Anacystis nidulans).